Consider the following 152-residue polypeptide: UPF0266 membrane protein ESA_01432 (152 aa).

3 helical membrane passes run Met-1–Tyr-21, Ala-45–His-65, and Ala-67–Ile-87.

It belongs to the UPF0266 family.

Its subcellular location is the cell inner membrane. The chain is UPF0266 membrane protein ESA_01432 from Cronobacter sakazakii (strain ATCC BAA-894) (Enterobacter sakazakii).